We begin with the raw amino-acid sequence, 374 residues long: 4-hydroxy-3-methylbut-2-en-1-yl diphosphate synthase (flavodoxin) (374 aa).

Positions 268, 271, 303, and 310 each coordinate [4Fe-4S] cluster.

The protein belongs to the IspG family. [4Fe-4S] cluster is required as a cofactor.

It catalyses the reaction (2E)-4-hydroxy-3-methylbut-2-enyl diphosphate + oxidized [flavodoxin] + H2O + 2 H(+) = 2-C-methyl-D-erythritol 2,4-cyclic diphosphate + reduced [flavodoxin]. Its pathway is isoprenoid biosynthesis; isopentenyl diphosphate biosynthesis via DXP pathway; isopentenyl diphosphate from 1-deoxy-D-xylulose 5-phosphate: step 5/6. In terms of biological role, converts 2C-methyl-D-erythritol 2,4-cyclodiphosphate (ME-2,4cPP) into 1-hydroxy-2-methyl-2-(E)-butenyl 4-diphosphate. The chain is 4-hydroxy-3-methylbut-2-en-1-yl diphosphate synthase (flavodoxin) from Geobacillus kaustophilus (strain HTA426).